Here is a 509-residue protein sequence, read N- to C-terminus: 2,3-bisphosphoglycerate-independent phosphoglycerate mutase (509 aa).

Residues D12 and S62 each coordinate Mn(2+). The active-site Phosphoserine intermediate is the S62. Residues H123, 153–154 (RD), R185, R191, 260–263 (RPDR), and K333 each bind substrate. D400, H404, D441, H442, and H460 together coordinate Mn(2+).

It belongs to the BPG-independent phosphoglycerate mutase family. As to quaternary structure, monomer. The cofactor is Mn(2+).

The catalysed reaction is (2R)-2-phosphoglycerate = (2R)-3-phosphoglycerate. Its pathway is carbohydrate degradation; glycolysis; pyruvate from D-glyceraldehyde 3-phosphate: step 3/5. In terms of biological role, catalyzes the interconversion of 2-phosphoglycerate and 3-phosphoglycerate. The protein is 2,3-bisphosphoglycerate-independent phosphoglycerate mutase of Clostridium botulinum (strain ATCC 19397 / Type A).